Here is a 291-residue protein sequence, read N- to C-terminus: Protease HtpX homolog (291 aa).

Transmembrane regions (helical) follow at residues 4–24 (VVLFLFTNLAVMLVLSVSARV) and 38–58 (MGMLLLFAALIGFGGSFISLL). Position 144 (H144) interacts with Zn(2+). E145 is a catalytic residue. H148 serves as a coordination point for Zn(2+). A run of 2 helical transmembrane segments spans residues 159–179 (LIQGVLNTFVIFLSRVIAYAI) and 199–219 (ISSIIFEIMFGILASVVVMYF). E224 is a binding site for Zn(2+).

The protein belongs to the peptidase M48B family. Zn(2+) serves as cofactor.

The protein localises to the cell inner membrane. This is Protease HtpX homolog from Chlorobium phaeobacteroides (strain DSM 266 / SMG 266 / 2430).